A 399-amino-acid polypeptide reads, in one-letter code: uncharacterized protein (399 aa).

A disordered region spans residues 254-335; the sequence is SRVSTGDTSP…FFRDSDDDGD (82 aa). A compositionally biased stretch (polar residues) spans 255–264; sequence RVSTGDTSPY. Basic and acidic residues predominate over residues 310-329; it reads RNAEMKKSHSANDSEEFFRD.

This is an uncharacterized protein from Xenopus laevis (African clawed frog).